A 165-amino-acid chain; its full sequence is Ubiquitin-like protein 4B (165 aa).

The Ubiquitin-like domain occupies 1–76; the sequence is MFLTVKLLLG…ISVVVRPLEK (76 aa). The segment at 139–165 is disordered; sequence EPLAQPTGEREPEVLSPNKEEEKEAVQ. The span at 146-165 shows a compositional bias: basic and acidic residues; it reads GEREPEVLSPNKEEEKEAVQ.

The protein localises to the cytoplasm. The protein is Ubiquitin-like protein 4B (UBL4B) of Bos taurus (Bovine).